Consider the following 200-residue polypeptide: Phospholipase A2 inhibitor 1 (200 aa).

The signal sequence occupies residues 1–19 (MKSLHIICLLFIFVARGNS). 8 disulfide bridges follow: C22-C46, C25-C32, C39-C67, C73-C94, C95-C100, C118-C143, C136-C165, and C169-C191. A glycan (N-linked (GlcNAc...) asparagine) is linked at N176.

It belongs to the CNF-like-inhibitor family. Occurs as a mixture of oligomers. Tetrameric arrangement appears to be the predominant quaternary structure. In terms of processing, N-glycosylated. As to expression, expressed by the liver.

Its subcellular location is the secreted. Its function is as follows. Inhibits basic phospholipase A2 isozymes PLA-B, BP-I and BP-II. The sequence is that of Phospholipase A2 inhibitor 1 from Protobothrops flavoviridis (Habu).